Here is a 140-residue protein sequence, read N- to C-terminus: Profilin-1 (140 aa).

Ala-2 is modified (N-acetylalanine). Ser-28 carries the phosphoserine modification. Lys-54 participates in a covalent cross-link: Glycyl lysine isopeptide (Lys-Gly) (interchain with G-Cter in SUMO2); alternate. A Glycyl lysine isopeptide (Lys-Gly) (interchain with G-Cter in ubiquitin); alternate cross-link involves residue Lys-54. A Phosphoserine modification is found at Ser-57. Lys-108 is modified (N6-acetyllysine). Tyr-129 carries the post-translational modification Phosphotyrosine. A Phosphoserine; by ROCK1 modification is found at Ser-138.

Belongs to the profilin family. Found in a complex with XPO6, Ran, ACTB and PFN1. Interacts with ACTB. Interacts with VASP. Interacts with HTT. Interacts with SH3BGRL. Occurs in many kinds of cells as a complex with monomeric actin in a 1:1 ratio. Interacts with ACTMAP. Phosphorylation at Ser-138 reduces its affinity for G-actin and blocks its interaction with HTT, reducing its ability to inhibit androgen receptor (AR) and HTT aggregation.

It is found in the cytoplasm. The protein resides in the cytoskeleton. Its function is as follows. Binds to actin and affects the structure of the cytoskeleton. At high concentrations, profilin prevents the polymerization of actin, whereas it enhances it at low concentrations. By binding to PIP2, it inhibits the formation of IP3 and DG. Inhibits androgen receptor (AR) and HTT aggregation and binding of G-actin is essential for its inhibition of AR. In Bos taurus (Bovine), this protein is Profilin-1 (PFN1).